A 113-amino-acid polypeptide reads, in one-letter code: UPF0482 protein KPN78578_15540 (113 aa).

The N-terminal stretch at 1 to 28 is a signal peptide; it reads MNMTLNKRWCLTAILALSAVVYTSSSYA. The segment at 38–60 is disordered; sequence GDSAQSRQQASMEKEQWNDTRSL. Polar residues predominate over residues 39–48; sequence DSAQSRQQAS. Residues 49–59 show a composition bias toward basic and acidic residues; it reads MEKEQWNDTRS.

This sequence belongs to the UPF0482 family.

This Klebsiella pneumoniae subsp. pneumoniae (strain ATCC 700721 / MGH 78578) protein is UPF0482 protein KPN78578_15540.